A 54-amino-acid polypeptide reads, in one-letter code: Light-harvesting protein B-880 beta chain (54 aa).

The Cytoplasmic portion of the chain corresponds to 1–20; that stretch reads AEDRSSLSGVSDAEAKEFHA. A bacteriochlorophyll is bound by residues H19 and H37. A helical transmembrane segment spans residues 21–43; sequence LFVSSFMGFMVVAVLAHVLAWAW. At 44–54 the chain is on the periplasmic side; sequence RPWIPGPKGWA.

Belongs to the antenna complex beta subunit family. As to quaternary structure, the core complex is formed by different alpha and beta chains, binding bacteriochlorophyll molecules, and arranged most probably in tetrameric structures disposed around the reaction center. The non-pigmented gamma chains may constitute additional components.

It localises to the cell inner membrane. Functionally, antenna complexes are light-harvesting systems, which transfer the excitation energy to the reaction centers. The polypeptide is Light-harvesting protein B-880 beta chain (Rhodoblastus acidophilus (Rhodopseudomonas acidophila)).